Consider the following 226-residue polypeptide: Phosphoglycolate phosphatase (226 aa).

Residue Asp-8 is the Nucleophile of the active site. Mg(2+)-binding residues include Asp-8 and Asp-10. Lys-152 contributes to the substrate binding site. 2 residues coordinate Mg(2+): Asp-175 and Asp-179.

Belongs to the archaeal SPP-like hydrolase family. Mg(2+) serves as cofactor.

The enzyme catalyses 2-phosphoglycolate + H2O = glycolate + phosphate. Its function is as follows. Catalyzes the dephosphorylation of 2-phosphoglycolate. The chain is Phosphoglycolate phosphatase from Natronomonas pharaonis (strain ATCC 35678 / DSM 2160 / CIP 103997 / JCM 8858 / NBRC 14720 / NCIMB 2260 / Gabara) (Halobacterium pharaonis).